A 158-amino-acid chain; its full sequence is tRNA (cytidine(34)-2'-O)-methyltransferase (158 aa).

Residues glycine 103, isoleucine 123, and serine 131 each coordinate S-adenosyl-L-methionine.

It belongs to the class IV-like SAM-binding methyltransferase superfamily. RNA methyltransferase TrmH family. TrmL subfamily. In terms of assembly, homodimer.

It localises to the cytoplasm. It carries out the reaction cytidine(34) in tRNA + S-adenosyl-L-methionine = 2'-O-methylcytidine(34) in tRNA + S-adenosyl-L-homocysteine + H(+). The enzyme catalyses 5-carboxymethylaminomethyluridine(34) in tRNA(Leu) + S-adenosyl-L-methionine = 5-carboxymethylaminomethyl-2'-O-methyluridine(34) in tRNA(Leu) + S-adenosyl-L-homocysteine + H(+). Methylates the ribose at the nucleotide 34 wobble position in the two leucyl isoacceptors tRNA(Leu)(CmAA) and tRNA(Leu)(cmnm5UmAA). Catalyzes the methyl transfer from S-adenosyl-L-methionine to the 2'-OH of the wobble nucleotide. The sequence is that of tRNA (cytidine(34)-2'-O)-methyltransferase from Ancylobacter novellus (strain ATCC 8093 / DSM 506 / JCM 20403 / CCM 1077 / IAM 12100 / NBRC 12443 / NCIMB 10456) (Starkeya novella).